The following is a 121-amino-acid chain: Natriuretic peptides B (121 aa).

The first 26 residues, 1–26, serve as a signal peptide directing secretion; sequence MDLQKVLPQMILLLLFLNLSPLGGHS. A disulfide bond links C99 and C115.

Belongs to the natriuretic peptide family. In terms of processing, the precursor molecule is proteolytically cleaved by the endoprotease Furin to produce brain natriuretic peptide 45. May undergo further proteolytic cleavage by various proteases such as DPP4, MME and possibly FAP, to give rise to a variety of shorter peptides. May be cleaved at Ser-91 by the prolyl endopeptidase FAP (seprase) activity (in vitro). May be degraded by IDE. During IDE degradation, the resulting products initially increase the activation of NPR1 and can also stimulate NPR2 to produce cGMP before the fragments are completely degraded and inactivated by IDE (in vitro). As to expression, expressed in the atria and ventricles, but at much lower levels than NPPA. Expression levels in the ventricles are slightly higher than in the atria. Very low levels of expression detected in the brain, hypothalamus, lung and aorta. Atria (at protein level). Cardiocytes (at protein level).

The protein resides in the secreted. In terms of biological role, cardiac hormone that plays a key role in mediating cardio-renal homeostasis. May also function as a paracrine antifibrotic factor in the heart. Acts by specifically binding and stimulating NPR1 to produce cGMP, which in turn activates effector proteins that drive various biological responses. Likely involved in regulating the extracellular fluid volume and maintaining the fluid-electrolyte balance through natriuresis, diuresis, kaluresis and chloruresis. This is Natriuretic peptides B (Nppb) from Rattus norvegicus (Rat).